The primary structure comprises 150 residues: Small heat shock protein HspE (150 aa).

In terms of domain architecture, sHSP spans 27–137 (VDNGDTYPPY…KPRQIAIDVA (111 aa)).

It belongs to the small heat shock protein (HSP20) family.

This is Small heat shock protein HspE (hspE) from Bradyrhizobium diazoefficiens (strain JCM 10833 / BCRC 13528 / IAM 13628 / NBRC 14792 / USDA 110).